The chain runs to 134 residues: Large ribosomal subunit protein uL14 (134 aa).

Belongs to the universal ribosomal protein uL14 family. In terms of assembly, in the 70S ribosome, L14 and L19 interact and together make contacts with the 16S rRNA in bridges B5 and B8. Part of the 50S ribosomal subunit. Forms a cluster with proteins L3 and L19.

Forms part of two intersubunit bridges in the 70S ribosome. Binds to 23S rRNA. The protein is Large ribosomal subunit protein uL14 of Deinococcus radiodurans (strain ATCC 13939 / DSM 20539 / JCM 16871 / CCUG 27074 / LMG 4051 / NBRC 15346 / NCIMB 9279 / VKM B-1422 / R1).